The following is a 323-amino-acid chain: Zinc finger protein 784 (323 aa).

The segment at 1–26 is disordered; sequence MAAARPEAQSRSSPTPESRSQEPLDL. The segment covering 9–18 has biased composition (polar residues); that stretch reads QSRSSPTPES. S13 bears the Phosphoserine mark. 6 consecutive C2H2-type zinc fingers follow at residues 65–87, 101–123, 129–151, 196–218, 224–246, and 252–274; these read FHCA…EHGH, SRCH…YSLH, YRCA…QHRH, FACR…ERVH, YHCG…ARIH, and FRCT…QRTH. The interval 269-323 is disordered; the sequence is KHQRTHFHGPGPGLGDSGGQLGSSAAEGSGSGCGVGDPAEEGRGETAKVKVEADQ. Residues 278-289 show a composition bias toward gly residues; sequence PGPGLGDSGGQL. Over residues 308–323 the composition is skewed to basic and acidic residues; the sequence is EEGRGETAKVKVEADQ. K318 is covalently cross-linked (Glycyl lysine isopeptide (Lys-Gly) (interchain with G-Cter in SUMO2)).

This sequence belongs to the krueppel C2H2-type zinc-finger protein family.

It is found in the nucleus. Functionally, may be involved in transcriptional regulation. The protein is Zinc finger protein 784 (ZNF784) of Homo sapiens (Human).